We begin with the raw amino-acid sequence, 60 residues long: Large ribosomal subunit protein uL30 (60 aa).

It belongs to the universal ribosomal protein uL30 family. In terms of assembly, part of the 50S ribosomal subunit.

The chain is Large ribosomal subunit protein uL30 from Streptococcus pyogenes serotype M1.